Reading from the N-terminus, the 475-residue chain is Ribulose bisphosphate carboxylase large chain (475 aa).

Residues 1–2 constitute a propeptide that is removed on maturation; it reads MS. N-acetylproline is present on Pro3. Lys14 is modified (N6,N6,N6-trimethyllysine). The substrate site is built by Asn123 and Thr173. Residue Lys175 is the Proton acceptor of the active site. Lys177 provides a ligand contact to substrate. 3 residues coordinate Mg(2+): Lys201, Asp203, and Glu204. N6-carboxylysine is present on Lys201. The active-site Proton acceptor is His294. Substrate-binding residues include Arg295, His327, and Ser379.

This sequence belongs to the RuBisCO large chain family. Type I subfamily. As to quaternary structure, heterohexadecamer of 8 large chains and 8 small chains; disulfide-linked. The disulfide link is formed within the large subunit homodimers. The cofactor is Mg(2+). In terms of processing, the disulfide bond which can form in the large chain dimeric partners within the hexadecamer appears to be associated with oxidative stress and protein turnover.

The protein localises to the plastid. The protein resides in the chloroplast. The catalysed reaction is 2 (2R)-3-phosphoglycerate + 2 H(+) = D-ribulose 1,5-bisphosphate + CO2 + H2O. It carries out the reaction D-ribulose 1,5-bisphosphate + O2 = 2-phosphoglycolate + (2R)-3-phosphoglycerate + 2 H(+). Functionally, ruBisCO catalyzes two reactions: the carboxylation of D-ribulose 1,5-bisphosphate, the primary event in carbon dioxide fixation, as well as the oxidative fragmentation of the pentose substrate in the photorespiration process. Both reactions occur simultaneously and in competition at the same active site. The protein is Ribulose bisphosphate carboxylase large chain of Calycanthus floridus var. glaucus (Eastern sweetshrub).